The primary structure comprises 229 residues: Protein FAM3C (229 aa).

A signal peptide spans 1 to 24 (MRIAGAIKFVIAVALFLLTFYVIS). Cystine bridges form between Cys-59–Cys-87 and Cys-65–Cys-222. Residues 68–226 (KHFAFKIASG…VEMEGCIPQK (159 aa)) enclose the GG-type lectin domain.

Belongs to the FAM3 family.

Its subcellular location is the secreted. Its function is as follows. Involved in retinal laminar formation. This Xenopus tropicalis (Western clawed frog) protein is Protein FAM3C (fam3c).